A 336-amino-acid chain; its full sequence is N-acetyl-gamma-glutamyl-phosphate reductase (336 aa).

The active site involves cysteine 144.

It belongs to the NAGSA dehydrogenase family. Type 1 subfamily.

The protein resides in the cytoplasm. The enzyme catalyses N-acetyl-L-glutamate 5-semialdehyde + phosphate + NADP(+) = N-acetyl-L-glutamyl 5-phosphate + NADPH + H(+). It participates in amino-acid biosynthesis; L-arginine biosynthesis; N(2)-acetyl-L-ornithine from L-glutamate: step 3/4. In terms of biological role, catalyzes the NADPH-dependent reduction of N-acetyl-5-glutamyl phosphate to yield N-acetyl-L-glutamate 5-semialdehyde. The sequence is that of N-acetyl-gamma-glutamyl-phosphate reductase from Methanosarcina acetivorans (strain ATCC 35395 / DSM 2834 / JCM 12185 / C2A).